A 96-amino-acid polypeptide reads, in one-letter code: Conantokin Rl-B (96 aa).

The first 21 residues, M1 to G21, serve as a signal peptide directing secretion. The propeptide occupies T22–R78. Residues K51–N96 are disordered. Residues A77–N96 show a composition bias toward basic and acidic residues. E81 serves as a coordination point for a divalent metal cation. 3 positions are modified to 4-carboxyglutamate: E81, E82, and E85. E85 is a binding site for a divalent metal cation. A 4-hydroxyproline modification is found at P88. A divalent metal cation is bound by residues E89 and E93. E89 and E93 each carry 4-carboxyglutamate. Position 96 is an asparagine amide (N96).

This sequence belongs to the conotoxin B superfamily. The cofactor is Ca(2+). Mg(2+) is required as a cofactor. In terms of processing, hydroxylation of Pro-88 is important for NR2B/GRIN2B NMDA receptor selectivity. Removal of hydroxylation does not change global NMDA receptor antagonism (tested on WT neurons), but it decreases the inhibitory potency on NR2B/GRIN2B NMDA receptors and increases the inhibitory potency on NR2A/GRIN2A NMDA receptors. Hydroxylation of Pro-88 locally disrupts a small region of the divalent cation-induced alpha-helix but does not destabilize the entire helix. Expressed by the venom duct.

It is found in the secreted. Its function is as follows. Conantokins inhibit N-methyl-D-aspartate (NMDA) receptors. This toxin has antagonist activity on the NR2B/GRIN2B subunit (IC(50)=0.1 uM). In vivo, when delivered into the brain, is active has anticonvulsant activity in the model of epilepsy in mice. The chain is Conantokin Rl-B from Conus rolani (Cone snail).